A 331-amino-acid polypeptide reads, in one-letter code: 5-dehydro-2-deoxygluconokinase (331 aa).

Belongs to the carbohydrate kinase PfkB family.

The enzyme catalyses 5-dehydro-2-deoxy-D-gluconate + ATP = 6-phospho-5-dehydro-2-deoxy-D-gluconate + ADP + H(+). Its pathway is polyol metabolism; myo-inositol degradation into acetyl-CoA; acetyl-CoA from myo-inositol: step 5/7. Catalyzes the phosphorylation of 5-dehydro-2-deoxy-D-gluconate (2-deoxy-5-keto-D-gluconate or DKG) to 6-phospho-5-dehydro-2-deoxy-D-gluconate (DKGP). The polypeptide is 5-dehydro-2-deoxygluconokinase (Halalkalibacterium halodurans (strain ATCC BAA-125 / DSM 18197 / FERM 7344 / JCM 9153 / C-125) (Bacillus halodurans)).